The sequence spans 357 residues: UDP-arabinopyranose mutase 1 (357 aa).

Val2 carries the N-acetylvaline modification. The DXD motif signature appears at 110–112; the sequence is DDD. Arg158 carries an N-linked (Glc...) arginine glycan.

This sequence belongs to the RGP family. Heteromers with RGP2, RGP3, RGP4 and RGP5. The cofactor is Mn(2+). It depends on Mg(2+) as a cofactor. Post-translationally, reversibly glycosylated in vitro by UDP-glucose, UDP-xylose and UDP-galactose, but not UDP-mannose. As to expression, predominantly expressed in shoot and root apical meristems. Expressed in epidermal cells of leaves, inflorescence stems and seed coat. Expressed in pollen.

It is found in the cytoplasm. Its subcellular location is the cytosol. It localises to the golgi apparatus. The catalysed reaction is UDP-beta-L-arabinofuranose = UDP-beta-L-arabinopyranose. In terms of biological role, UDP-L-arabinose mutase involved in the biosynthesis of cell wall non-cellulosic polysaccharides. Catalyzes the interconvertion of UDP-L-arabinopyranose (UDP-Arap) and UDP-L-arabinofuranose (UDP-Araf) in vitro. Preferentially catalyzes the formation of UDP-Arap from UDP-Araf. At thermodynamic equilibrium in vitro the ratio of the pyranose form over the furanose form is 95:5. Is not active on other UDP-sugars (UDP-Gal, UDP-Xyl, UDP-Glc, GDP-Man and GDP-Fuc). Functions redundantly with RGP2 and is essential for proper cell walls and pollen development. Probably involved in the formation of the pectocellulosic cell wall layer intine. Is probably active as heteromer in vivo. The sequence is that of UDP-arabinopyranose mutase 1 from Arabidopsis thaliana (Mouse-ear cress).